The sequence spans 470 residues: ATP synthase subunit beta (470 aa).

155–162 contacts ATP; that stretch reads GGAGVGKT.

This sequence belongs to the ATPase alpha/beta chains family. As to quaternary structure, F-type ATPases have 2 components, CF(1) - the catalytic core - and CF(0) - the membrane proton channel. CF(1) has five subunits: alpha(3), beta(3), gamma(1), delta(1), epsilon(1). CF(0) has three main subunits: a(1), b(2) and c(9-12). The alpha and beta chains form an alternating ring which encloses part of the gamma chain. CF(1) is attached to CF(0) by a central stalk formed by the gamma and epsilon chains, while a peripheral stalk is formed by the delta and b chains.

The protein localises to the cell membrane. The enzyme catalyses ATP + H2O + 4 H(+)(in) = ADP + phosphate + 5 H(+)(out). In terms of biological role, produces ATP from ADP in the presence of a proton gradient across the membrane. The catalytic sites are hosted primarily by the beta subunits. The polypeptide is ATP synthase subunit beta (Staphylococcus saprophyticus subsp. saprophyticus (strain ATCC 15305 / DSM 20229 / NCIMB 8711 / NCTC 7292 / S-41)).